We begin with the raw amino-acid sequence, 613 residues long: Metacaspase-1 (613 aa).

Residues H404 and C460 contribute to the active site.

The protein belongs to the peptidase C14B family. As to quaternary structure, monomer.

Activated by Ca(2+). Cysteine protease that cleaves specifically after arginine or lysine residues. May play a role in apoptosis. The chain is Metacaspase-1 from Plasmodium falciparum (isolate 3D7).